Consider the following 641-residue polypeptide: Bifunctional protein glk (641 aa).

Residues 1–21 (MSTGAQTKAAEASQHADGPRL) form a disordered region. Residues 1–340 (MSTGAQTKAA…QLSNRTGGAS (340 aa)) form a glucokinase region. 23–28 (ADVGGT) serves as a coordination point for ATP. The HTH rpiR-type domain maps to 341–417 (SAVFERIRQM…LKLATGLTGT (77 aa)). The segment at 341–641 (SAVFERIRQM…SHGAAPAAKE (301 aa)) is putative HTH-type transcriptional regulator. Residues 377 to 396 (IVDIARKADVSQPTVIRFCR) constitute a DNA-binding region (H-T-H motif). The SIS domain maps to 461–600 (AIDILNNARR…AVGVAIRRAS (140 aa)). The helical transmembrane segment at 576-596 (SMISRILHLVMIDILAVGVAI) threads the bilayer.

In the N-terminal section; belongs to the bacterial glucokinase family.

Its subcellular location is the membrane. The catalysed reaction is D-glucose + ATP = D-glucose 6-phosphate + ADP + H(+). The polypeptide is Bifunctional protein glk (glk) (Burkholderia thailandensis (strain ATCC 700388 / DSM 13276 / CCUG 48851 / CIP 106301 / E264)).